The chain runs to 391 residues: S-adenosylmethionine synthase (391 aa).

H14 contacts ATP. A Mg(2+)-binding site is contributed by D16. E42 lines the K(+) pocket. E55 and Q98 together coordinate L-methionine. The flexible loop stretch occupies residues 98 to 108 (QSVDIAIGVDE). ATP contacts are provided by residues 172-174 (DGK), 238-239 (RF), D247, 253-254 (RK), A270, and K274. Residue D247 coordinates L-methionine. Residue K278 participates in L-methionine binding.

Belongs to the AdoMet synthase family. Homotetramer; dimer of dimers. The cofactor is Mg(2+). It depends on K(+) as a cofactor.

The protein resides in the cytoplasm. It carries out the reaction L-methionine + ATP + H2O = S-adenosyl-L-methionine + phosphate + diphosphate. It functions in the pathway amino-acid biosynthesis; S-adenosyl-L-methionine biosynthesis; S-adenosyl-L-methionine from L-methionine: step 1/1. Functionally, catalyzes the formation of S-adenosylmethionine (AdoMet) from methionine and ATP. The overall synthetic reaction is composed of two sequential steps, AdoMet formation and the subsequent tripolyphosphate hydrolysis which occurs prior to release of AdoMet from the enzyme. The polypeptide is S-adenosylmethionine synthase (Clostridium botulinum (strain Okra / Type B1)).